Reading from the N-terminus, the 105-residue chain is Ketoisovalerate oxidoreductase subunit VorD (105 aa).

2 4Fe-4S ferredoxin-type domains span residues F44–D73 and G74–E103. [4Fe-4S] cluster contacts are provided by C53, C56, C59, C63, C83, C86, C89, and C93.

In terms of assembly, heterotetramer of one alpha, one beta, one delta and one gamma chain. [4Fe-4S] cluster is required as a cofactor.

It catalyses the reaction 3-methyl-2-oxobutanoate + 2 oxidized [2Fe-2S]-[ferredoxin] + CoA = 2-methylpropanoyl-CoA + 2 reduced [2Fe-2S]-[ferredoxin] + CO2 + H(+). The sequence is that of Ketoisovalerate oxidoreductase subunit VorD (vorD) from Pyrococcus furiosus (strain ATCC 43587 / DSM 3638 / JCM 8422 / Vc1).